A 63-amino-acid chain; its full sequence is Protein sigN172 (63 aa).

The polypeptide is Protein sigN172 (Dictyostelium discoideum (Social amoeba)).